A 261-amino-acid chain; its full sequence is MFEARLVQGSILKKVLEALKDLIDEACWDITSSGISLQSMDSSHVSLVQLTLRSDGFDTYRCDRNQSIGVKMSSMSKILKCAASDDIITLRAEDNADTVTMVFESPNQEKVSDYEMKLMDLDVEQLGIPEQEYSCVIKMPSGEFARICRDLSQIGDAVVISCAKDGVKFSASGELGTGNVKLSQTSNVDKEEEAVTIEMNEPVQLTFALRYLNFFTKATPLSPTVILSMSADIPLVVEYKIADMEHVKYYLAPKIEDEEAS.

The DNA-binding element occupies 61 to 80 (RCDRNQSIGVKMSSMSKILK). K164 is covalently cross-linked (Glycyl lysine isopeptide (Lys-Gly) (interchain with G-Cter in ubiquitin)).

Belongs to the PCNA family. As to quaternary structure, homotrimer. Forms a complex with activator 1 heteropentamer in the presence of ATP. Component of the replisome complex. Interacts with apex2.L (via PIP box and GRF-type Zinc finger domain); the interaction is required for 3'-5' single-strand break (SSB) end resection, assembly of a checkpoint protein complex to SSB sites, and SSB signaling. In terms of processing, monoubiquitinated by the ube2b-rad18 complex on Lys-164. Monoubiquitination at Lys-164 also takes place in undamaged proliferating cells, and is mediated by the dcx(dtl) complex, leading to enhance PCNA-dependent translesion DNA synthesis.

The protein localises to the nucleus. Functionally, this protein is an auxiliary protein of DNA polymerase delta and is involved in the control of eukaryotic DNA replication by increasing the polymerase's processibility during elongation of the leading strand. Promotes 3'-5' nuclease activity of the DNA-endonuclease apex2.L in response to DNA damage. This chain is Proliferating cell nuclear antigen (pcna), found in Xenopus laevis (African clawed frog).